A 437-amino-acid chain; its full sequence is Bystin (437 aa).

The interval 1–105 (MPKFKAARGV…DGSDDEDEEW (105 aa)) is disordered. The residue at position 40 (arginine 40) is an Omega-N-methylarginine. A Phosphoserine modification is found at serine 55. A compositionally biased stretch (basic and acidic residues) spans 71–87 (AEHGTGDKPAAPRERTT). The residue at position 98 (serine 98) is a Phosphoserine. Threonine 156 is modified (phosphothreonine). Phosphoserine occurs at positions 167 and 414.

The protein belongs to the bystin family. As to quaternary structure, binds trophinin, tastin and cytokeratins. As to expression, found in the placenta from the sixth week of pregnancy. Was localized in the cytoplasm of the syncytiotrophoblast in the chorionic villi and in endometrial decidual cells at the uteroplacental interface. After week 10, the level decreased and then disappeared from placental villi.

The protein localises to the cytoplasm. It localises to the nucleus. Its subcellular location is the nucleolus. Required for processing of 20S pre-rRNA precursor and biogenesis of 40S ribosomal subunits. May be required for trophinin-dependent regulation of cell adhesion during implantation of human embryos. The polypeptide is Bystin (Homo sapiens (Human)).